Consider the following 277-residue polypeptide: Cis-2,3-dihydrobiphenyl-2,3-diol dehydrogenase (277 aa).

Leucine 9–alanine 33 contacts NAD(+). A substrate-binding site is contributed by serine 142. The active-site Proton acceptor is tyrosine 155.

It belongs to the short-chain dehydrogenases/reductases (SDR) family. Homotetramer.

The enzyme catalyses (2R,3S)-3-phenylcyclohexa-3,5-diene-1,2-diol + NAD(+) = biphenyl-2,3-diol + NADH + H(+). Its pathway is xenobiotic degradation; biphenyl degradation; 2-hydroxy-2,4-pentadienoate and benzoate from biphenyl: step 2/4. The chain is Cis-2,3-dihydrobiphenyl-2,3-diol dehydrogenase (bphB) from Pseudomonas putida (Arthrobacter siderocapsulatus).